Consider the following 749-residue polypeptide: MNTATQASVSLTPEFIAATEKEITPHWGELGWVTYKRTYARWLPEQQRNEEWPETVKRVVEGNINLDPRLQADTVTPEVLTELTTEAQNLFRLIYGLAATPSGRNLWISGTDYQHRNGDALNNCWFIAVRPQAYGDSHILPSYLTQDQVAVSMPFSFMFDQLMKGGGVGFSVTPNNVHQMPVVDQTVDLTIVIDPESASYADSVALGAVNRSEWMHDNSLADVRFYRLPDTREGWVLANANMMDAHFNSTNPEKKTKVVLDISDIRPKNAPIHGFGGTASGPMPLVEMLFDINQILNNAVGRQLTAVDCTDMGNMIGKTVVAGNVRRSAELALGGAEDDAFITMKQDKDQLYHHRWASNNSVAVDSDFTDYAPIADSIQHNGEPGIVNLGLSRNYGRLIDGRQEGIDEAVEGTNPCGEISLSNGEPCNLFEVFPSVAEEQGWQLEDAFGLGARYTKRVTFSHYDWEVSRKAIQKNRRIGVSMSGIQDWILKTFKQRVVTGFEAKHDAETGKTFMQPIYNQAAVNRFNALYQAVVKADQDYSDTLGCQPSIKHTTVKPSGTVAKLAGVSEGMHFHYARYLIQRIRFQDSDPLLPALKASGYKVEPDVYSQNTMCVEFPVKAAHADEPAFASAGEVSMAEQFATQAFLQTYWSDNAVSCTVTFQPEEGQDISDLLLQYRHTIKSTSLLPYSGADFKQAPKEPIDAATYDAKCQEITADVAEKFAAMTGNHDQKDIELVDQSDCESGACPIR.

Residues Cys-124 and Cys-427 are joined by a disulfide bond. Residues 152 to 163 (SMPFSFMFDQLM) are effector region-1. The effector region-2 stretch occupies residues 173 to 321 (TPNNVHQMPV…MGNMIGKTVV (149 aa)). Catalysis depends on residues Cys-416 and Glu-418. Residues 573-634 (FHYARYLIQR…EPAFASAGEV (62 aa)) form an adenosylcobalamin-binding-1 region. The tract at residues 693–734 (FKQAPKEPIDAATYDAKCQEITADVAEKFAAMTGNHDQKDIE) is adenosylcobalamin-binding-2.

This sequence belongs to the class II ribonucleoside-triphosphate reductase family. In terms of assembly, monomer. Requires adenosylcob(III)alamin as cofactor.

It catalyses the reaction a 2'-deoxyribonucleoside 5'-triphosphate + [thioredoxin]-disulfide + H2O = a ribonucleoside 5'-triphosphate + [thioredoxin]-dithiol. Allosterically regulated by ATP and dNTP. The chain is Adenosylcobalamin-dependent ribonucleoside-triphosphate reductase (rtpR) from Levilactobacillus brevis (strain ATCC 367 / BCRC 12310 / CIP 105137 / JCM 1170 / LMG 11437 / NCIMB 947 / NCTC 947) (Lactobacillus brevis).